The sequence spans 160 residues: tRNA (cytidine(56)-2'-O)-methyltransferase (160 aa).

S-adenosyl-L-methionine contacts are provided by residues Leu-68, 94–98, and 112–119; these read GAEKV and IGNQPHSE.

Belongs to the aTrm56 family. In terms of assembly, homodimer.

It is found in the cytoplasm. It catalyses the reaction cytidine(56) in tRNA + S-adenosyl-L-methionine = 2'-O-methylcytidine(56) in tRNA + S-adenosyl-L-homocysteine + H(+). In terms of biological role, specifically catalyzes the AdoMet-dependent 2'-O-ribose methylation of cytidine at position 56 in tRNAs. In Saccharolobus solfataricus (strain ATCC 35092 / DSM 1617 / JCM 11322 / P2) (Sulfolobus solfataricus), this protein is tRNA (cytidine(56)-2'-O)-methyltransferase.